Reading from the N-terminus, the 89-residue chain is Small ribosomal subunit protein uS15 (89 aa).

It belongs to the universal ribosomal protein uS15 family. In terms of assembly, part of the 30S ribosomal subunit. Forms a bridge to the 50S subunit in the 70S ribosome, contacting the 23S rRNA.

In terms of biological role, one of the primary rRNA binding proteins, it binds directly to 16S rRNA where it helps nucleate assembly of the platform of the 30S subunit by binding and bridging several RNA helices of the 16S rRNA. Forms an intersubunit bridge (bridge B4) with the 23S rRNA of the 50S subunit in the ribosome. The chain is Small ribosomal subunit protein uS15 from Cupriavidus necator (strain ATCC 17699 / DSM 428 / KCTC 22496 / NCIMB 10442 / H16 / Stanier 337) (Ralstonia eutropha).